Reading from the N-terminus, the 1041-residue chain is FHIP family protein GF15501 (1041 aa).

Disordered regions lie at residues 797–856 and 907–987; these read RKGN…NKRR and SNSS…SEPV. Serine 803 bears the Phosphoserine mark. Positions 808–824 are enriched in low complexity; the sequence is NLQQQQALNPAQQQGQQ. Polar residues-rich tracts occupy residues 825-843 and 907-933; these read RSAY…TPTS and SNSS…LSTQ. A compositionally biased stretch (low complexity) spans 942 to 973; the sequence is SGSSSNSSMGGSSQTLSAHSNATTTHSSSTLH.

The protein belongs to the FHIP family.

This Drosophila ananassae (Fruit fly) protein is FHIP family protein GF15501.